We begin with the raw amino-acid sequence, 137 residues long: BolA-like protein 1 (137 aa).

Residue serine 81 is modified to Phosphoserine. The tract at residues 114-137 (WRENSQLDTSPPCLGGNKKTLGTP) is disordered.

This sequence belongs to the BolA/IbaG family. As to quaternary structure, interacts with GLRX5. In terms of tissue distribution, widely expressed.

The protein localises to the mitochondrion. Its function is as follows. Acts as a mitochondrial iron-sulfur (Fe-S) cluster assembly factor that facilitates (Fe-S) cluster insertion into a subset of mitochondrial proteins. Probably acts together with the monothiol glutaredoxin GLRX5. May protect cells against oxidative stress. The sequence is that of BolA-like protein 1 from Homo sapiens (Human).